The following is a 109-amino-acid chain: Elongation factor G, chloroplastic (109 aa).

Belongs to the GTP-binding elongation factor family. EF-G/EF-2 subfamily.

It is found in the plastid. The protein localises to the chloroplast. It functions in the pathway protein biosynthesis; polypeptide chain elongation. Its function is as follows. Chloroplast-localized elongation factor EF-G involved in protein synthesis in plastids. Catalyzes the GTP-dependent ribosomal translocation step during translation elongation. During this step, the ribosome changes from the pre-translocational (PRE) to the post-translocational (POST) state as the newly formed A-site-bound peptidyl-tRNA and P-site-bound deacylated tRNA move to the P and E sites, respectively. Catalyzes the coordinated movement of the two tRNA molecules, the mRNA and conformational changes in the ribosome. This Arachis hypogaea (Peanut) protein is Elongation factor G, chloroplastic.